The following is a 37-amino-acid chain: Large ribosomal subunit protein bL36 (37 aa).

Positions 11, 14, 27, and 32 each coordinate Zn(2+).

It belongs to the bacterial ribosomal protein bL36 family. Part of the 50S ribosomal subunit. Zn(2+) is required as a cofactor.

Functionally, binds the 23S rRNA. This is Large ribosomal subunit protein bL36 (rpmJ) from Deinococcus radiodurans (strain ATCC 13939 / DSM 20539 / JCM 16871 / CCUG 27074 / LMG 4051 / NBRC 15346 / NCIMB 9279 / VKM B-1422 / R1).